The following is a 447-amino-acid chain: Chromosomal replication initiator protein DnaA (447 aa).

Positions 1-70 (MQDFWSKAMD…EEILSEQLGE (70 aa)) are domain I, interacts with DnaA modulators. The tract at residues 70 to 110 (EPVTLLFAADPALEKPVASKTQTVTPVQSGGETGDQENFHS) is domain II. Residues 87–109 (ASKTQTVTPVQSGGETGDQENFH) form a disordered region. Residues 88 to 99 (SKTQTVTPVQSG) are compositionally biased toward polar residues. The interval 111 to 327 (GLDPRYTFDS…GALIRVSAYA (217 aa)) is domain III, AAA+ region. Residues Gly-155, Gly-157, Lys-158, and Thr-159 each coordinate ATP. A domain IV, binds dsDNA region spans residues 328 to 447 (SLTGKPITMA…LASLKSMLQK (120 aa)).

Belongs to the DnaA family. As to quaternary structure, oligomerizes as a right-handed, spiral filament on DNA at oriC.

The protein localises to the cytoplasm. In terms of biological role, plays an essential role in the initiation and regulation of chromosomal replication. ATP-DnaA binds to the origin of replication (oriC) to initiate formation of the DNA replication initiation complex once per cell cycle. Binds the DnaA box (a 9 base pair repeat at the origin) and separates the double-stranded (ds)DNA. Forms a right-handed helical filament on oriC DNA; dsDNA binds to the exterior of the filament while single-stranded (ss)DNA is stabiized in the filament's interior. The ATP-DnaA-oriC complex binds and stabilizes one strand of the AT-rich DNA unwinding element (DUE), permitting loading of DNA polymerase. After initiation quickly degrades to an ADP-DnaA complex that is not apt for DNA replication. Binds acidic phospholipids. The chain is Chromosomal replication initiator protein DnaA from Magnetococcus marinus (strain ATCC BAA-1437 / JCM 17883 / MC-1).